The following is a 393-amino-acid chain: Pyridinium-3,5-bisthiocarboxylic acid mononucleotide nickel insertion protein (393 aa).

The protein belongs to the LarC family.

It catalyses the reaction Ni(II)-pyridinium-3,5-bisthiocarboxylate mononucleotide = pyridinium-3,5-bisthiocarboxylate mononucleotide + Ni(2+). In terms of biological role, involved in the biosynthesis of a nickel-pincer cofactor ((SCS)Ni(II) pincer complex). Binds Ni(2+), and functions in nickel delivery to pyridinium-3,5-bisthiocarboxylic acid mononucleotide (P2TMN), to form the mature cofactor. Is thus probably required for the activation of nickel-pincer cofactor-dependent enzymes. This is Pyridinium-3,5-bisthiocarboxylic acid mononucleotide nickel insertion protein from Nocardioides sp. (strain ATCC BAA-499 / JS614).